A 177-amino-acid polypeptide reads, in one-letter code: Large ribosomal subunit protein uL6 (177 aa).

The protein belongs to the universal ribosomal protein uL6 family. As to quaternary structure, part of the 50S ribosomal subunit.

This protein binds to the 23S rRNA, and is important in its secondary structure. It is located near the subunit interface in the base of the L7/L12 stalk, and near the tRNA binding site of the peptidyltransferase center. This Histophilus somni (strain 129Pt) (Haemophilus somnus) protein is Large ribosomal subunit protein uL6.